The sequence spans 267 residues: 3-methyl-2-oxobutanoate hydroxymethyltransferase (267 aa).

Mg(2+)-binding residues include Asp-46 and Asp-85. 3-methyl-2-oxobutanoate-binding positions include Asp-46 to Ser-47, Asp-85, and Lys-115. Glu-117 lines the Mg(2+) pocket. Residue Glu-184 is the Proton acceptor of the active site.

The protein belongs to the PanB family. In terms of assembly, homodecamer; pentamer of dimers. Requires Mg(2+) as cofactor.

It localises to the cytoplasm. The catalysed reaction is 3-methyl-2-oxobutanoate + (6R)-5,10-methylene-5,6,7,8-tetrahydrofolate + H2O = 2-dehydropantoate + (6S)-5,6,7,8-tetrahydrofolate. Its pathway is cofactor biosynthesis; (R)-pantothenate biosynthesis; (R)-pantoate from 3-methyl-2-oxobutanoate: step 1/2. Its function is as follows. Catalyzes the reversible reaction in which hydroxymethyl group from 5,10-methylenetetrahydrofolate is transferred onto alpha-ketoisovalerate to form ketopantoate. The protein is 3-methyl-2-oxobutanoate hydroxymethyltransferase of Citrifermentans bemidjiense (strain ATCC BAA-1014 / DSM 16622 / JCM 12645 / Bem) (Geobacter bemidjiensis).